The chain runs to 383 residues: Ovalbumin (383 aa).

Gly2 is subject to N-acetylglycine. The segment at residues 22–48 (HHANDNMLYSPFAILSTLAMVFLGAKD) is a signal peptide (not cleaved). Position 69 is a phosphoserine (Ser69). The cysteines at positions 74 and 121 are disulfide-linked. N-linked (GlcNAc...) asparagine glycosylation is found at Asn293 and Asn312. Phosphoserine is present on Ser345.

The protein belongs to the serpin family. Ov-serpin subfamily. Post-translationally, the signal sequence is not cleaved. The functional signal for membrane translocation of ovalbumin becomes accessible when the nascent chain is 50 to 60 residues long. The hydrophobic sequence which lies between residues 27 and 43 folds back on the preceding residues to form an amphipathic hairpin structure which is the signal element recognized by the membrane. As to expression, major protein of egg white.

Its subcellular location is the secreted. Functionally, storage protein of egg white. Lack protease inhibitory activity. This Coturnix japonica (Japanese quail) protein is Ovalbumin (SERPINB14).